We begin with the raw amino-acid sequence, 512 residues long: NAD(P)H-quinone oxidoreductase subunit 2, organellar chromatophore (512 aa).

The next 14 helical transmembrane spans lie at 6–26, 43–63, 80–100, 107–127, 133–153, 168–188, 210–230, 242–262, 276–296, 304–324, 332–352, 376–396, 411–431, and 464–484; these read LLAL…LLAL, WVPP…ASQW, LAIA…MISW, GAPM…AMFL, LVSI…LAGY, LLVG…LYGL, AALA…AVPF, PTPI…ALAL, WKFL…IVAL, MLAY…VCGT, ILYL…VILF, IGLS…GFFG, LLVV…ISVI, and VALL…NPLF.

This sequence belongs to the complex I subunit 2 family. NDH-1 can be composed of about 15 different subunits; different subcomplexes with different compositions have been identified which probably have different functions.

The protein resides in the plastid. It localises to the organellar chromatophore thylakoid membrane. It carries out the reaction a plastoquinone + NADH + (n+1) H(+)(in) = a plastoquinol + NAD(+) + n H(+)(out). It catalyses the reaction a plastoquinone + NADPH + (n+1) H(+)(in) = a plastoquinol + NADP(+) + n H(+)(out). Functionally, NDH-1 shuttles electrons from an unknown electron donor, via FMN and iron-sulfur (Fe-S) centers, to quinones in the respiratory and/or the photosynthetic chain. The immediate electron acceptor for the enzyme in this species is believed to be plastoquinone. Couples the redox reaction to proton translocation, and thus conserves the redox energy in a proton gradient. Cyanobacterial NDH-1 also plays a role in inorganic carbon-concentration. This Paulinella chromatophora protein is NAD(P)H-quinone oxidoreductase subunit 2, organellar chromatophore.